The sequence spans 305 residues: Tyrosine recombinase XerC (305 aa).

Positions 4-95 (TSIQALINKW…AVKNFYRFLE (92 aa)) constitute a Core-binding (CB) domain. Residues 116-298 (LLPKALSEDD…SIKHLEAVYT (183 aa)) form the Tyr recombinase domain. Residues Arg-159, Lys-182, His-250, Arg-253, and His-276 contribute to the active site. Tyr-285 serves as the catalytic O-(3'-phospho-DNA)-tyrosine intermediate.

This sequence belongs to the 'phage' integrase family. XerC subfamily. In terms of assembly, forms a cyclic heterotetrameric complex composed of two molecules of XerC and two molecules of XerD.

The protein localises to the cytoplasm. Site-specific tyrosine recombinase, which acts by catalyzing the cutting and rejoining of the recombining DNA molecules. The XerC-XerD complex is essential to convert dimers of the bacterial chromosome into monomers to permit their segregation at cell division. It also contributes to the segregational stability of plasmids. The protein is Tyrosine recombinase XerC of Rickettsia africae (strain ESF-5).